The primary structure comprises 487 residues: Proline--tRNA ligase (487 aa).

The protein belongs to the class-II aminoacyl-tRNA synthetase family. ProS type 3 subfamily. In terms of assembly, homodimer.

Its subcellular location is the cytoplasm. The enzyme catalyses tRNA(Pro) + L-proline + ATP = L-prolyl-tRNA(Pro) + AMP + diphosphate. Functionally, catalyzes the attachment of proline to tRNA(Pro) in a two-step reaction: proline is first activated by ATP to form Pro-AMP and then transferred to the acceptor end of tRNA(Pro). This is Proline--tRNA ligase from Pyrobaculum neutrophilum (strain DSM 2338 / JCM 9278 / NBRC 100436 / V24Sta) (Thermoproteus neutrophilus).